Consider the following 142-residue polypeptide: Putative pre-16S rRNA nuclease (142 aa).

It belongs to the YqgF nuclease family.

It localises to the cytoplasm. Could be a nuclease involved in processing of the 5'-end of pre-16S rRNA. The chain is Putative pre-16S rRNA nuclease from Nitratidesulfovibrio vulgaris (strain DSM 19637 / Miyazaki F) (Desulfovibrio vulgaris).